An 89-amino-acid chain; its full sequence is Small ribosomal subunit protein uS15 (89 aa).

Residues 1–11 (MSITAERKAEV) show a composition bias toward basic and acidic residues. The disordered stretch occupies residues 1–25 (MSITAERKAEVIKTNARKSGDTGSP).

Belongs to the universal ribosomal protein uS15 family. In terms of assembly, part of the 30S ribosomal subunit. Forms a bridge to the 50S subunit in the 70S ribosome, contacting the 23S rRNA.

Functionally, one of the primary rRNA binding proteins, it binds directly to 16S rRNA where it helps nucleate assembly of the platform of the 30S subunit by binding and bridging several RNA helices of the 16S rRNA. Forms an intersubunit bridge (bridge B4) with the 23S rRNA of the 50S subunit in the ribosome. The protein is Small ribosomal subunit protein uS15 of Nitrobacter hamburgensis (strain DSM 10229 / NCIMB 13809 / X14).